The sequence spans 217 residues: Adenylate kinase (217 aa).

10–15 (GIGKGT) contributes to the ATP binding site. Residues 30–59 (ATGDIFRKNFKENTELGILIKKIIAQGLLV) form an NMP region. Residues threonine 31, arginine 36, 57-59 (LLV), 85-88 (GFPR), and glutamine 92 contribute to the AMP site. The segment at 126 to 163 (GRRICPECGKVYHIENIPPKTPGICDKDQKTLIQREDD) is LID. Arginine 127 contributes to the ATP binding site. Zn(2+)-binding residues include cysteine 130 and cysteine 133. Position 136–137 (136–137 (VY)) interacts with ATP. Residues cysteine 150 and aspartate 153 each contribute to the Zn(2+) site. AMP-binding residues include arginine 160 and arginine 171. Glutamine 199 serves as a coordination point for ATP.

It belongs to the adenylate kinase family. As to quaternary structure, monomer.

It localises to the cytoplasm. It catalyses the reaction AMP + ATP = 2 ADP. It participates in purine metabolism; AMP biosynthesis via salvage pathway; AMP from ADP: step 1/1. Functionally, catalyzes the reversible transfer of the terminal phosphate group between ATP and AMP. Plays an important role in cellular energy homeostasis and in adenine nucleotide metabolism. The chain is Adenylate kinase from Onion yellows phytoplasma (strain OY-M).